The chain runs to 569 residues: MATRCFWCWTTLLFCSQLLTGFARASSAGGAKEKGLSQTPTWAVALVCTFFILVSVLLEKALHRVATWLWEKHKNSLLEALEKIKAELMILGFISLLLTFGEQYILKICIPEKAAASMLPCPAPSTHDQDKTHRRRLAAATTSSRCDEGHEPLIPATGLHQLHILLFFMAAFHILYSFITMMLGRLKIRGWKKWEQETCSHDYEFSIDPSRFRLTHETSFVRQHSSFWTKIPFFFYAGCFLQQFFRSVGRTDYLTLRHGFIAAHLAPGRKFDFQKYIKRSLEDDFKVVVGISPLLWASFVIFLLLNVNGWEALFWASILPVLIILAVSTKLQAILTRMALGITERHAVVQGIPLVHGSDKYFWFNRPQLLLHLLHFALFQNAFQLTYFFWVWYSFGLKSCFHTDFKLVIVKLSLGVGALILCSYITLPLYALVTQMGSNMKKAVFDEQMAKALKKWHMTVKKKKGKARKPPTETLGVSDTVSTSTSSFHASGATLLRSKTTGHSTASYMSNFEDQSMSDLEAEPLSPEPIEGHTLVRVGDQNTEIEYTGDISPGNQFSFVKNVPANDID.

Over 1–41 (MATRCFWCWTTLLFCSQLLTGFARASSAGGAKEKGLSQTPT) the chain is Extracellular. Residues 42 to 62 (WAVALVCTFFILVSVLLEKAL) traverse the membrane as a helical segment. At 63-85 (HRVATWLWEKHKNSLLEALEKIK) the chain is on the cytoplasmic side. Residues 86-106 (AELMILGFISLLLTFGEQYIL) traverse the membrane as a helical segment. At 107 to 163 (KICIPEKAAASMLPCPAPSTHDQDKTHRRRLAAATTSSRCDEGHEPLIPATGLHQLH) the chain is on the extracellular side. The helical transmembrane segment at 164-184 (ILLFFMAAFHILYSFITMMLG) threads the bilayer. Residues 185 to 286 (RLKIRGWKKW…IKRSLEDDFK (102 aa)) lie on the Cytoplasmic side of the membrane. Residues 287–307 (VVVGISPLLWASFVIFLLLNV) traverse the membrane as a helical segment. Asn308 is a topological domain (extracellular). The chain crosses the membrane as a helical span at residues 309 to 329 (GWEALFWASILPVLIILAVST). The Cytoplasmic portion of the chain corresponds to 330-372 (KLQAILTRMALGITERHAVVQGIPLVHGSDKYFWFNRPQLLLH). A helical transmembrane segment spans residues 373–393 (LLHFALFQNAFQLTYFFWVWY). The Extracellular segment spans residues 394 to 413 (SFGLKSCFHTDFKLVIVKLS). A helical transmembrane segment spans residues 414–434 (LGVGALILCSYITLPLYALVT). The Cytoplasmic portion of the chain corresponds to 435–569 (QMGSNMKKAV…VKNVPANDID (135 aa)). The segment at 447–468 (EQMAKALKKWHMTVKKKKGKAR) is calmodulin-binding.

It belongs to the MLO family.

Its subcellular location is the membrane. Functionally, may be involved in modulation of pathogen defense and leaf cell death. Activity seems to be regulated by Ca(2+)-dependent calmodulin binding and seems not to require heterotrimeric G proteins. The protein is MLO-like protein 10 (MLO10) of Arabidopsis thaliana (Mouse-ear cress).